The following is a 278-amino-acid chain: Dehydrogenase/reductase SDR family member 4 (278 aa).

36 to 60 is an NADP(+) binding site; that stretch reads LVTASTDGIGFAIARRLAQDGAHVV. Lysine 92 carries the N6-acetyllysine; alternate modification. N6-succinyllysine; alternate is present on lysine 92. The residue at position 105 (lysine 105) is an N6-acetyllysine. Serine 169 provides a ligand contact to substrate. The active-site Proton acceptor is the tyrosine 182. NADP(+) is bound at residue lysine 186. An N6-acetyllysine; alternate modification is found at lysine 216. Lysine 216 bears the N6-succinyllysine; alternate mark. Residue serine 220 is modified to Phosphoserine. Residues lysine 227 and lysine 234 each carry the N6-succinyllysine modification. The short motif at 276 to 278 is the Peroxisomal targeting signal element; the sequence is SRL.

The protein belongs to the short-chain dehydrogenases/reductases (SDR) family. Homotetramer.

It is found in the peroxisome. It carries out the reaction a secondary alcohol + NADP(+) = a ketone + NADPH + H(+). The enzyme catalyses 3beta-hydroxy-5beta-pregnane-20-one + NADP(+) = 5beta-pregnan-3,20-dione + NADPH + H(+). The catalysed reaction is 5beta-dihydrotestosterone + NADPH + H(+) = 5beta-androstane-3beta,17beta-diol + NADP(+). It catalyses the reaction 5beta-androstane-3,17-dione + NADPH + H(+) = 3beta-hydroxy-5beta-androstane-17-one + NADP(+). It carries out the reaction isatin + NADPH + H(+) = 3-hydroxyindolin-2-one + NADP(+). The enzyme catalyses lithocholate + NADP(+) = 3-oxo-5beta-cholan-24-oate + NADPH + H(+). The catalysed reaction is 3-oxo-5beta-cholan-24-oate + NADPH + H(+) = isolithocholate + NADP(+). Its function is as follows. NADPH-dependent oxidoreductase which catalyzes the reduction of a variety of compounds bearing carbonyl groups including ketosteroids, alpha-dicarbonyl compounds, aldehydes, aromatic ketones and quinones. Reduces 3-ketosteroids and benzil into 3beta-hydroxysteroids and R-benzoin, respectively, in contrast to the stereoselectivity of non-primate DHRS4s which produce 3alpha-hydroxysteroids and S-benzoin. Diplays low activity toward all-trans-retinal and no activity toward 9-cis-retinal as compared to non-primate mammals. In the reverse reaction, catalyze the NAD-dependent oxidation of 3beta-hydroxysteroids and alcohol, but with much lower efficiency. Involved in the metabolism of 3beta-hydroxysteroids, isatin and xenobiotic carbonyl compounds. The sequence is that of Dehydrogenase/reductase SDR family member 4 (DHRS4) from Pongo abelii (Sumatran orangutan).